The following is a 480-amino-acid chain: Cysteine--tRNA ligase (480 aa).

Residue Cys29 participates in Zn(2+) binding. A 'HIGH' region motif is present at residues 31–41; the sequence is PTVYSDPHLGH. The Zn(2+) site is built by Cys220, His245, and Glu249. The short motif at 276–280 is the 'KMSKS' region element; it reads KMAKS. ATP is bound at residue Lys279.

This sequence belongs to the class-I aminoacyl-tRNA synthetase family. In terms of assembly, monomer. The cofactor is Zn(2+).

It localises to the cytoplasm. The enzyme catalyses tRNA(Cys) + L-cysteine + ATP = L-cysteinyl-tRNA(Cys) + AMP + diphosphate. This is Cysteine--tRNA ligase from Thermus thermophilus (strain ATCC BAA-163 / DSM 7039 / HB27).